A 463-amino-acid chain; its full sequence is Asparagine--tRNA ligase (463 aa).

It belongs to the class-II aminoacyl-tRNA synthetase family. In terms of assembly, homodimer.

The protein localises to the cytoplasm. It catalyses the reaction tRNA(Asn) + L-asparagine + ATP = L-asparaginyl-tRNA(Asn) + AMP + diphosphate + H(+). This chain is Asparagine--tRNA ligase, found in Clostridium botulinum (strain Langeland / NCTC 10281 / Type F).